The chain runs to 100 residues: Class II hydrophobin FOXG_02746 (100 aa).

The signal sequence occupies residues 1 to 17 (MQFYTIVSLFLAGTAYA). Disulfide bonds link C29/C79, C40/C70, C41/C53, and C80/C92.

This sequence belongs to the cerato-ulmin hydrophobin family. Homodimer. Homodimers further self-assemble to form highly ordered films at water-air interfaces through intermolecular interactions.

The protein localises to the secreted. It localises to the cell wall. Functionally, aerial growth, conidiation, and dispersal of filamentous fungi in the environment rely upon a capability of their secreting small amphipathic proteins called hydrophobins (HPBs) with low sequence identity. Class I can self-assemble into an outermost layer of rodlet bundles on aerial cell surfaces, conferring cellular hydrophobicity that supports fungal growth, development and dispersal; whereas Class II form highly ordered films at water-air interfaces through intermolecular interactions but contribute nothing to the rodlet structure. FOXG_02746 is a class II hydrophobin that is likely required for plant colonization. The protein is Class II hydrophobin FOXG_02746 of Fusarium oxysporum f. sp. lycopersici (strain 4287 / CBS 123668 / FGSC 9935 / NRRL 34936) (Fusarium vascular wilt of tomato).